Consider the following 511-residue polypeptide: Keratin, type II cytoskeletal 72 (511 aa).

The interval 1–124 (MSRQLTHFPR…DPEIQRVRAQ (124 aa)) is head. Positions 125-160 (EREQIKALNNKFASFIDKVRFLEQQNQVLETKWNLL) are coil 1A. Residues 125 to 438 (EREQIKALNN…KLLESEECRM (314 aa)) enclose the IF rod domain. The tract at residues 161–179 (QQLDLNNCRKNLEPIYEGY) is linker 1. The tract at residues 180-271 (ISNLQKQLEM…CLYEGEITQI (92 aa)) is coil 1B. Positions 272–295 (QSHISDTSIVLSMDNNRDLDLDSI) are linker 12. A coil 2 region spans residues 296–434 (IAEVRAQYEE…ATYRKLLESE (139 aa)). Residues 435 to 511 (ECRMSGEYPN…SSCATKKASR (77 aa)) form a tail region. The disordered stretch occupies residues 486–511 (GSCGSELKDPLAKTSGSSCATKKASR).

The protein belongs to the intermediate filament family. In terms of assembly, heterotetramer of two type I and two type II keratins. Highly expressed in hair follicles from scalp and eyebrow. Also expressed in palmoplantar epidermis. Not expressed in face skin despite the presence of fine hairs histologically. In hair, it is specifically present in the inner root sheath (IRS) of the hair follicle. Present in the IRS cuticle, but not in Henle or Huxley layers of the IRS. In the IRS cuticle, its presence is delayed up to the height of the apex of the dermal papilla (at protein level).

Its function is as follows. Has a role in hair formation. Specific component of keratin intermediate filaments in the inner root sheath (IRS) of the hair follicle. The chain is Keratin, type II cytoskeletal 72 (KRT72) from Homo sapiens (Human).